Here is a 205-residue protein sequence, read N- to C-terminus: N-(5'-phosphoribosyl)anthranilate isomerase (205 aa).

Belongs to the TrpF family.

It carries out the reaction N-(5-phospho-beta-D-ribosyl)anthranilate = 1-(2-carboxyphenylamino)-1-deoxy-D-ribulose 5-phosphate. Its pathway is amino-acid biosynthesis; L-tryptophan biosynthesis; L-tryptophan from chorismate: step 3/5. This is N-(5'-phosphoribosyl)anthranilate isomerase from Trichlorobacter lovleyi (strain ATCC BAA-1151 / DSM 17278 / SZ) (Geobacter lovleyi).